The following is a 238-amino-acid chain: Sugar fermentation stimulation protein homolog (238 aa).

The protein belongs to the SfsA family.

The chain is Sugar fermentation stimulation protein homolog from Haemophilus influenzae (strain ATCC 51907 / DSM 11121 / KW20 / Rd).